A 447-amino-acid polypeptide reads, in one-letter code: Probable 7-dehydrocholesterol reductase (447 aa).

8 consecutive transmembrane segments (helical) span residues 24–44 (LTTA…YLIT), 71–91 (IPSF…FQLI), 102–124 (FVPH…LVYY), 133–153 (IITH…PTII), 157–177 (WGSI…LAYF), 244–264 (YVSN…VDFF), 281–301 (FGWM…TLQA), and 309–329 (IDLS…GYII). NADP(+)-binding positions include Lys337, Arg341, Ile367, Trp372, and 379–380 (NY). The helical transmembrane segment at 393–413 (ACGFSHFIPYFYCVYMTILLV) threads the bilayer. NADP(+) is bound by residues Asp419, 423 to 427 (CSRKY), and Tyr434.

The protein belongs to the ERG4/ERG24 family.

It is found in the membrane. It catalyses the reaction cholesterol + NADP(+) = 7-dehydrocholesterol + NADPH + H(+). It functions in the pathway steroid biosynthesis; cholesterol biosynthesis. In terms of biological role, catalyzes the last step of the cholesterol synthesis pathway, which transforms cholesta-5,7-dien-3beta-ol (7-dehydrocholesterol,7-DHC) into cholesterol by reducing the C7-C8 double bond of its sterol core. The chain is Probable 7-dehydrocholesterol reductase (DHCR7) from Acanthamoeba polyphaga (Amoeba).